Here is a 410-residue protein sequence, read N- to C-terminus: Translation initiation factor 2 subunit gamma (410 aa).

One can recognise a tr-type G domain in the interval 9–202 (QAEVNIGMVG…AIEEFIPTPK (194 aa)). Residues 18–25 (GHVDHGKT) form a G1 region. Residues Asp-21, Thr-25, Gly-46, and Thr-48 each contribute to the Mg(2+) site. Position 21-26 (21-26 (DHGKTT)) interacts with GTP. Residues 46–50 (GITIK) are G2. Positions 61, 64, 73, and 76 each coordinate Zn(2+). The interval 90–93 (DAPG) is G3. Residues 145 to 148 (NKIE) and 180 to 182 (SAL) contribute to the GTP site. Residues 145–148 (NKIE) are G4. The interval 180–182 (SAL) is G5.

The protein belongs to the TRAFAC class translation factor GTPase superfamily. Classic translation factor GTPase family. EIF2G subfamily. As to quaternary structure, heterotrimer composed of an alpha, a beta and a gamma chain. Mg(2+) serves as cofactor.

It catalyses the reaction GTP + H2O = GDP + phosphate + H(+). In terms of biological role, eIF-2 functions in the early steps of protein synthesis by forming a ternary complex with GTP and initiator tRNA. This chain is Translation initiation factor 2 subunit gamma, found in Thermococcus kodakarensis (strain ATCC BAA-918 / JCM 12380 / KOD1) (Pyrococcus kodakaraensis (strain KOD1)).